We begin with the raw amino-acid sequence, 227 residues long: MLLPYNEWRHVFKLDPAKEIEEAALQAIATSGTDAIIVGGTDDITLDATLDLLMRLRRYPVAVALEVSELEAATMGFDAYLTPSVLNSGTLEHVIDKQVEALEEVGHMLAHQDLVGEGYIVLNADAKVARVTQAKLLNDDQVVAYAQLADSVFRMPIIYLEYSGMYGDPSLVASVKRVLKQGRLFYGGGIDSIERAQEMLTHADTIVVGNIIYDNLEAALATVAATR.

Lysine 13 is a binding site for sn-glycerol 1-phosphate. Mg(2+) contacts are provided by aspartate 15 and threonine 41. Sn-glycerol 1-phosphate is bound by residues 159-164 (YLEYSG), glycine 189, and 209-210 (GN).

This sequence belongs to the GGGP/HepGP synthase family. Group I subfamily. In terms of assembly, homodimer. Mg(2+) serves as cofactor.

The enzyme catalyses sn-glycerol 1-phosphate + all-trans-heptaprenyl diphosphate = 3-heptaprenyl-sn-glycero-1-phosphate + diphosphate. Its pathway is membrane lipid metabolism; glycerophospholipid metabolism. In terms of biological role, prenyltransferase that catalyzes in vivo the transfer of the heptaprenyl moiety of heptaprenyl pyrophosphate (HepPP; 35 carbon atoms) to the C3 hydroxyl of sn-glycerol-1-phosphate (G1P), producing heptaprenylglyceryl phosphate (HepGP). This reaction is an ether-bond-formation step in the biosynthesis of archaea-type G1P-based membrane lipids found in Bacillales. The sequence is that of Heptaprenylglyceryl phosphate synthase from Exiguobacterium sibiricum (strain DSM 17290 / CCUG 55495 / CIP 109462 / JCM 13490 / 255-15).